Here is a 273-residue protein sequence, read N- to C-terminus: Shikimate dehydrogenase (NADP(+)) (273 aa).

Residues 14 to 16 (SKS) and Thr-61 contribute to the shikimate site. The active-site Proton acceptor is the Lys-65. Glu-77 lines the NADP(+) pocket. The shikimate site is built by Asn-86 and Asp-102. NADP(+)-binding positions include 126–130 (GAGGA), 150–155 (NRTLSK), and Met-214. Residue Tyr-216 participates in shikimate binding. Gly-238 lines the NADP(+) pocket.

Belongs to the shikimate dehydrogenase family. In terms of assembly, homodimer.

It catalyses the reaction shikimate + NADP(+) = 3-dehydroshikimate + NADPH + H(+). It functions in the pathway metabolic intermediate biosynthesis; chorismate biosynthesis; chorismate from D-erythrose 4-phosphate and phosphoenolpyruvate: step 4/7. Its function is as follows. Involved in the biosynthesis of the chorismate, which leads to the biosynthesis of aromatic amino acids. Catalyzes the reversible NADPH linked reduction of 3-dehydroshikimate (DHSA) to yield shikimate (SA). This Photobacterium profundum (strain SS9) protein is Shikimate dehydrogenase (NADP(+)).